The chain runs to 348 residues: MKKRIILLLAVIIAAAAAGVAFYVAKDKGHEKAADVSVNTESGDELLVSITDTDLLTKYYENDKVIHEEKLTSYPAFALDQKQQVLYYTGNNEQNEMRLFKLDLKSHKKTMLYKGAESADSLFLSKDRSTIYFRLGKADESNFRIAAFDLKTKKYKNLYPAANDQDDTVSSFFYNQKNDSFALLHYSVEEDYKKTDEANEKGIDPEPTTIHFAEGRQNKFNELKSLNQFISDIAVSDDDKRILFTSYTQKGTEQTASIQMLNADTKKYESIISNQKSFKLLIDAQPQFSKDGKNIYFLAEAKGAKKLKDETGREAKVRTIYSYSLENKTFKKVWENPNGIINSFFVIN.

Positions 1–26 (MKKRIILLLAVIIAAAAAGVAFYVAK) are cleaved as a signal peptide.

This is an uncharacterized protein from Bacillus subtilis (strain 168).